The primary structure comprises 427 residues: Enolase (427 aa).

A (2R)-2-phosphoglycerate-binding site is contributed by Q162. Residue E204 is the Proton donor of the active site. Residues D241, E283, and D310 each coordinate Mg(2+). The (2R)-2-phosphoglycerate site is built by K335, R364, S365, and K386. K335 (proton acceptor) is an active-site residue.

It belongs to the enolase family. It depends on Mg(2+) as a cofactor.

It localises to the cytoplasm. The protein localises to the secreted. The protein resides in the cell surface. It catalyses the reaction (2R)-2-phosphoglycerate = phosphoenolpyruvate + H2O. The protein operates within carbohydrate degradation; glycolysis; pyruvate from D-glyceraldehyde 3-phosphate: step 4/5. Its function is as follows. Catalyzes the reversible conversion of 2-phosphoglycerate (2-PG) into phosphoenolpyruvate (PEP). It is essential for the degradation of carbohydrates via glycolysis. In Mycolicibacterium smegmatis (strain ATCC 700084 / mc(2)155) (Mycobacterium smegmatis), this protein is Enolase.